A 196-amino-acid polypeptide reads, in one-letter code: Guanylate kinase (196 aa).

Residues 7–191 enclose the Guanylate kinase-like domain; it reads RNIVLLVGPS…AAEEIEKIIL (185 aa). 14–21 provides a ligand contact to ATP; that stretch reads GPSGVGKG.

This sequence belongs to the guanylate kinase family.

It localises to the cytoplasm. The enzyme catalyses GMP + ATP = GDP + ADP. Essential for recycling GMP and indirectly, cGMP. The chain is Guanylate kinase from Mycoplasmopsis pulmonis (strain UAB CTIP) (Mycoplasma pulmonis).